The primary structure comprises 150 residues: Histone H3-like centromeric protein CSE4 (150 aa).

Residues 1–11 (MARISLASSSA) show a composition bias toward polar residues. Residues 1–50 (MARISLASSSAGVAGKPRGGGGLHPLGQTRKTLPGERRDTTQKITKPRYK) form a disordered region. Residues 32 to 145 (TLPGERRDTT…MQLARRIRGA (114 aa)) are H3-like.

It belongs to the histone H3 family. Component of centromeric nucleosomes, where DNA is wrapped around a histone octamer core. The octamer contains two molecules each of H2A, H2B, CSE4/CENPA and H4 assembled in one CSE4-H4 heterotetramer and two H2A-H2B heterodimers. Interacts with the inner kinetochore. In terms of processing, ubiquitinated. Is degraded through ubiquitin-mediated proteolysis when not protected by its association to the kinetochore.

Its subcellular location is the nucleus. It localises to the chromosome. The protein resides in the centromere. In terms of biological role, histone H3-like nucleosomal protein that is specifically found in centromeric nucleosomes. Replaces conventional H3 in the nucleosome core of centromeric chromatin that serves as an assembly site for the inner kinetochore. Required for recruitment and assembly of kinetochore proteins, mitotic progression and chromosome segregation. May serve as an epigenetic mark that propagates centromere identity through replication and cell division. The protein is Histone H3-like centromeric protein CSE4 (CSE4) of Yarrowia lipolytica (strain CLIB 122 / E 150) (Yeast).